The primary structure comprises 236 residues: B-cell antigen receptor complex-associated protein alpha chain (236 aa).

The signal sequence occupies residues 1–32 (MPGGPGLLQALCATTFLLFLISAGGLGPGSQA). An Ig-like C2-type domain is found at 33–122 (LWVDGGPPSM…EKDLNQKILS (90 aa)). Over 33–151 (LWVDGGPPSM…LDMGEGTKNN (119 aa)) the chain is Extracellular. A disulfide bond links C54 and C109. 2 N-linked (GlcNAc...) asparagine glycosylation sites follow: N66 and N76. Residues 152-172 (IITAEGIILLFCAVVPGTLLL) form a helical membrane-spanning segment. Topologically, residues 173–236 (FRKRWQNMKF…GDGDVQLEKP (64 aa)) are cytoplasmic. The ITAM domain occupies 185–213 (DAQDDYEDENLYEGLNLDDCSMYEDISRG). The residue at position 196 (Y196) is a Phosphotyrosine; by SRC-type Tyr-kinases. Phosphotyrosine is present on Y207. R212 is modified (asymmetric dimethylarginine; by PRMT1). Y218 carries the post-translational modification Phosphotyrosine; by Tyr-kinases.

In terms of assembly, heterodimer of alpha and beta chains; disulfide-linked. Part of the B-cell antigen receptor complex where the alpha/beta chain heterodimer is non-covalently associated with an antigen-specific membrane-bound surface immunoglobulin of two heavy chains and two light chains. Interacts through its phosphorylated ITAM domain with the SH2 domains of SYK which stimulates SYK autophosphorylation and activation. Also interacts, when phosphorylated on Tyr-207, with the SH2 domain of BLNK/SLP65, bringing BLNK into proximity with SYK and allowing SYK to phosphorylate BLNK which is necessary for trafficking of the BCR to late endosomes. Interacts with Src-family tyrosine kinases including FYN and LYN, increasing their activity. Phosphorylated on tyrosine, serine and threonine residues upon B-cell activation. Phosphorylation of tyrosine residues by Src-family kinases, including LYN, is an early and essential feature of the BCR signaling cascade. The phosphorylated tyrosines serve as docking sites for SH2-domain containing kinases, leading to their activation which in turn leads to phosphorylation of downstream targets. Phosphorylation of serine and threonine residues may prevent subsequent tyrosine phosphorylation. Post-translationally, arginine methylation in the ITAM domain may interfere with the binding of SYK. It promotes signals leading to B-cell differentiation.

Its subcellular location is the cell membrane. Functionally, required in cooperation with CD79B for initiation of the signal transduction cascade activated by binding of antigen to the B-cell antigen receptor complex (BCR) which leads to internalization of the complex, trafficking to late endosomes and antigen presentation. Also required for BCR surface expression and for efficient differentiation of pro- and pre-B-cells. Stimulates SYK autophosphorylation and activation. Binds to BLNK, bringing BLNK into proximity with SYK and allowing SYK to phosphorylate BLNK. Also interacts with and increases activity of some Src-family tyrosine kinases. Represses BCR signaling during development of immature B-cells. This chain is B-cell antigen receptor complex-associated protein alpha chain (CD79A), found in Canis lupus familiaris (Dog).